Here is a 426-residue protein sequence, read N- to C-terminus: Enolase (426 aa).

Gln163 contributes to the (2R)-2-phosphoglycerate binding site. Glu205 functions as the Proton donor in the catalytic mechanism. Mg(2+) contacts are provided by Asp242, Glu285, and Asp312. 4 residues coordinate (2R)-2-phosphoglycerate: Lys337, Arg366, Ser367, and Lys388. Catalysis depends on Lys337, which acts as the Proton acceptor.

The protein belongs to the enolase family. Mg(2+) serves as cofactor.

It is found in the cytoplasm. Its subcellular location is the secreted. The protein localises to the cell surface. The catalysed reaction is (2R)-2-phosphoglycerate = phosphoenolpyruvate + H2O. Its pathway is carbohydrate degradation; glycolysis; pyruvate from D-glyceraldehyde 3-phosphate: step 4/5. Functionally, catalyzes the reversible conversion of 2-phosphoglycerate (2-PG) into phosphoenolpyruvate (PEP). It is essential for the degradation of carbohydrates via glycolysis. The sequence is that of Enolase from Gluconacetobacter diazotrophicus (strain ATCC 49037 / DSM 5601 / CCUG 37298 / CIP 103539 / LMG 7603 / PAl5).